We begin with the raw amino-acid sequence, 102 residues long: Small ribosomal subunit protein eS24 (102 aa).

This sequence belongs to the eukaryotic ribosomal protein eS24 family.

This is Small ribosomal subunit protein eS24 from Methanococcus aeolicus (strain ATCC BAA-1280 / DSM 17508 / OCM 812 / Nankai-3).